Reading from the N-terminus, the 189-residue chain is Ras-like protein 1 (189 aa).

10 to 17 (GAGGVGKS) provides a ligand contact to GTP. The short motif at 32–40 (YDPTIEDSY) is the Effector region element. Residues 57 to 61 (DTAGQ) and 116 to 119 (NKCD) contribute to the GTP site. A Cysteine methyl ester modification is found at Cys186. Cys186 is lipidated: S-geranylgeranyl cysteine. A propeptide spans 187-189 (KML) (removed in mature form).

It belongs to the small GTPase superfamily. Ras family.

Its subcellular location is the cell membrane. It carries out the reaction GTP + H2O = GDP + phosphate + H(+). With respect to regulation, alternates between an inactive form bound to GDP and an active form bound to GTP. Activated by a guanine nucleotide-exchange factor (GEF) and inactivated by a GTPase-activating protein (GAP). Its function is as follows. Ras proteins bind GDP/GTP and possess intrinsic GTPase activity. Plays a role in eye development by regulating cell growth, survival of postmitotic ommatidial cells and differentiation of photoreceptor cells. During larval development, mediates Ptth/tor signaling leading to the production of ecdysone, a hormone required for the initiation of metamorphosis. This Drosophila ananassae (Fruit fly) protein is Ras-like protein 1.